A 90-amino-acid polypeptide reads, in one-letter code: Probable Fe(2+)-trafficking protein (90 aa).

Belongs to the Fe(2+)-trafficking protein family.

Could be a mediator in iron transactions between iron acquisition and iron-requiring processes, such as synthesis and/or repair of Fe-S clusters in biosynthetic enzymes. This Pseudomonas fluorescens (strain SBW25) protein is Probable Fe(2+)-trafficking protein.